Reading from the N-terminus, the 450-residue chain is Tubulin alpha-5 chain (450 aa).

Positions 11, 71, 144, 145, 179, 206, and 228 each coordinate GTP. Position 71 (Glu71) interacts with Mg(2+). Residue Glu254 is part of the active site. Phosphothreonine is present on Thr349. Residues 429–450 (EKDYEEVGAEGGDDEEDEGEDY) form a disordered region. The span at 431–450 (DYEEVGAEGGDDEEDEGEDY) shows a compositional bias: acidic residues.

Belongs to the tubulin family. In terms of assembly, dimer of alpha and beta chains. A typical microtubule is a hollow water-filled tube with an outer diameter of 25 nm and an inner diameter of 15 nM. Alpha-beta heterodimers associate head-to-tail to form protofilaments running lengthwise along the microtubule wall with the beta-tubulin subunit facing the microtubule plus end conferring a structural polarity. Microtubules usually have 13 protofilaments but different protofilament numbers can be found in some organisms and specialized cells. Mg(2+) serves as cofactor. Post-translationally, undergoes a tyrosination/detyrosination cycle, the cyclic removal and re-addition of a C-terminal tyrosine residue by the enzymes tubulin tyrosine carboxypeptidase (TTCP) and tubulin tyrosine ligase (TTL), respectively.

It is found in the cytoplasm. The protein resides in the cytoskeleton. It carries out the reaction GTP + H2O = GDP + phosphate + H(+). Tubulin is the major constituent of microtubules, a cylinder consisting of laterally associated linear protofilaments composed of alpha- and beta-tubulin heterodimers. Microtubules grow by the addition of GTP-tubulin dimers to the microtubule end, where a stabilizing cap forms. Below the cap, tubulin dimers are in GDP-bound state, owing to GTPase activity of alpha-tubulin. In Arabidopsis thaliana (Mouse-ear cress), this protein is Tubulin alpha-5 chain (TUBA5).